Reading from the N-terminus, the 335-residue chain is Tryptophan--tRNA ligase (335 aa).

Residues 11–13 (QPT) and 19–20 (GN) contribute to the ATP site. A 'HIGH' region motif is present at residues 12 to 20 (PTGNLHLGN). Position 135 (aspartate 135) interacts with L-tryptophan. ATP contacts are provided by residues 147 to 149 (GED), valine 189, and 198 to 202 (KMSKS). A 'KMSKS' region motif is present at residues 198-202 (KMSKS).

This sequence belongs to the class-I aminoacyl-tRNA synthetase family. As to quaternary structure, homodimer.

Its subcellular location is the cytoplasm. The catalysed reaction is tRNA(Trp) + L-tryptophan + ATP = L-tryptophyl-tRNA(Trp) + AMP + diphosphate + H(+). Its function is as follows. Catalyzes the attachment of tryptophan to tRNA(Trp). This Nostoc sp. (strain PCC 7120 / SAG 25.82 / UTEX 2576) protein is Tryptophan--tRNA ligase.